A 247-amino-acid chain; its full sequence is ATP synthase subunit a 1 (247 aa).

Transmembrane regions (helical) follow at residues 32–52 (YMLL…RALV), 82–102 (FFPL…VGII), 112–132 (IIVT…YGFY), 141–161 (LFVP…IEII), 181–201 (GHVT…LGFV), and 206–226 (ALLP…VAFL).

It belongs to the ATPase A chain family. As to quaternary structure, F-type ATPases have 2 components, CF(1) - the catalytic core - and CF(0) - the membrane proton channel. CF(1) has five subunits: alpha(3), beta(3), gamma(1), delta(1), epsilon(1). CF(0) has four main subunits: a, b, b' and c.

The protein resides in the cell inner membrane. Functionally, key component of the proton channel; it plays a direct role in the translocation of protons across the membrane. This chain is ATP synthase subunit a 1, found in Bradyrhizobium sp. (strain BTAi1 / ATCC BAA-1182).